The following is a 118-amino-acid chain: DNA mimic protein DMP12 (118 aa).

It belongs to the DMP12-like protein family. As to quaternary structure, monomer. Interacts with the dimeric form of the DNA-binding protein HU.

Its function is as follows. Acts as a DNA mimic. Interacts with the DNA-binding protein HU and partially prevents the binding of HU protein to DNA by occupying the DNA binding sites on the protein. However, the relatively weak affinity of DMP12 for HU suggests that it may not completely block the HU protein-DNA binding, and that DMP12 is more likely to act as a regulator than a competitive inhibitor. It protects HU protein from limited digestion by trypsin in a limited trypsin digestion assay, suggesting that it may serve to protect the HU protein and improve the stability of unbound HU protein. The polypeptide is DNA mimic protein DMP12 (Neisseria meningitidis serogroup B (strain ATCC BAA-335 / MC58)).